The primary structure comprises 579 residues: MPRDETPEREHAEQQSRQALEEEVRELRRRVEEAPSRVRALEEKLLEVSGALAQTQAKNEKLTFTLQQAREHIQNLREEVEKLTQPPSAYGVYLAANQDGTADVFTTGRKMRVAVHPEIDLAAVRVGQEVVLNESFAIVSVRGSDVIGEVATVKDVLDDGSRVILLGRADEERVAQVAGHLQHPPLRVGDSVMVDPRSAMVLERLPRPEVSELALEEVPDITYHDIGGLDRQIEEIQDAVELPFLYRELFGDYRLPAPKGILLYGPPGCGKTLIAKAVANSLAKKVEQVSGRSVRSYFLNVKGPELLNKYVGETERQIRLIFQRAREKAEEGVPVIVFFDEMDSLFRTRGSGISSDMESTVVPQLLAEIDGVEALRNVIVIGASNREDLIDPAILRPGRLDVKIKIERPDEQAAREIFARYLTPEVPIDAGEVTTLGGGDAEKAIAVMIERTVERMYATSDENRFLEVTYQNGEKEILYFKDFSSGAMIENIVRRAKKLAIKREIAGGSRGICLDDLLASIAKEFKEHEDLPNTTNPDDWAKISGRKGERIVFMRILLHEEEGQTGGRAIERVATGQYL.

The tract at residues 1 to 21 (MPRDETPEREHAEQQSRQALE) is disordered. Residues 8 to 86 (EREHAEQQSR…REEVEKLTQP (79 aa)) are a coiled coil. 268-273 (GCGKTL) lines the ATP pocket. Residues 578–579 (YL) are docks into pockets in the proteasome alpha-ring.

It belongs to the AAA ATPase family. In terms of assembly, homohexamer. Assembles into a hexameric ring structure that caps the 20S proteasome core. Strongly interacts with the prokaryotic ubiquitin-like protein Pup through a hydrophobic interface; the interacting region of ARC lies in its N-terminal coiled-coil domain. There is one Pup binding site per ARC hexamer ring. Upon ATP-binding, the C-terminus of ARC interacts with the alpha-rings of the proteasome core, possibly by binding to the intersubunit pockets.

It participates in protein degradation; proteasomal Pup-dependent pathway. Functionally, ATPase which is responsible for recognizing, binding, unfolding and translocation of pupylated proteins into the bacterial 20S proteasome core particle. May be essential for opening the gate of the 20S proteasome via an interaction with its C-terminus, thereby allowing substrate entry and access to the site of proteolysis. Thus, the C-termini of the proteasomal ATPase may function like a 'key in a lock' to induce gate opening and therefore regulate proteolysis. The sequence is that of Proteasome-associated ATPase from Acidimicrobium ferrooxidans (strain DSM 10331 / JCM 15462 / NBRC 103882 / ICP).